The primary structure comprises 166 residues: Large ribosomal subunit protein uL10 (166 aa).

Belongs to the universal ribosomal protein uL10 family. As to quaternary structure, part of the ribosomal stalk of the 50S ribosomal subunit. The N-terminus interacts with L11 and the large rRNA to form the base of the stalk. The C-terminus forms an elongated spine to which L12 dimers bind in a sequential fashion forming a multimeric L10(L12)X complex.

Functionally, forms part of the ribosomal stalk, playing a central role in the interaction of the ribosome with GTP-bound translation factors. This Streptococcus equi subsp. zooepidemicus (strain MGCS10565) protein is Large ribosomal subunit protein uL10.